Reading from the N-terminus, the 937-residue chain is Protocadherin alpha-7 (937 aa).

An N-terminal signal peptide occupies residues 1 to 29 (MVCPNGYDPGGRHLLLFIIILAAWEAGRG). Cadherin domains lie at 30 to 133 (QLHY…PPVF), 134 to 242 (PATQ…APVF), 243 to 350 (DRTL…APQL), 351 to 455 (TLTS…APAF), 456 to 565 (AQPE…APAL), and 581 to 678 (VPRS…APKA). Over 30-697 (QLHYSVPEEA…GPETELVDVN (668 aa)) the chain is Extracellular. The cysteines at positions 96 and 102 are disulfide-linked. 2 N-linked (GlcNAc...) asparagine glycosylation sites follow: asparagine 254 and asparagine 265. N-linked (GlcNAc...) asparagine glycosylation occurs at asparagine 548. The chain crosses the membrane as a helical span at residues 698 to 718 (VYLIIAICAVSSLLVLTLLLY). Over 719–937 (TALRCSAPSS…GNSTTDNSDQ (219 aa)) the chain is Cytoplasmic. 2 disordered regions span residues 755–795 (RQRV…DWRY) and 814–937 (ILRA…NSDQ). 5 PXXP repeats span residues 774 to 777 (PSLP), 786 to 789 (PRQP), 819 to 822 (PGGP), 860 to 863 (PGNP), and 878 to 881 (PGSP). The segment at 774-881 (PSLPQGPSST…PDKFIIPGSP (108 aa)) is 5 X 4 AA repeats of P-X-X-P. The segment covering 775-787 (SLPQGPSSTDNPR) has biased composition (polar residues). The span at 896-910 (DKSDFITFGKKEETK) shows a compositional bias: basic and acidic residues.

Forms homodimers in trans (molecules expressed by two different cells). Forms promiscuous heterodimers in cis (at the plasma membrane of the same cell) with other protocadherins.

It localises to the cell membrane. Calcium-dependent cell-adhesion protein involved in cells self-recognition and non-self discrimination. Thereby, it is involved in the establishment and maintenance of specific neuronal connections in the brain. This is Protocadherin alpha-7 from Homo sapiens (Human).